The primary structure comprises 223 residues: Large ribosomal subunit protein uL4 (223 aa).

The interval 47-72 (GTASTKTRGEVAGGGRKPWPQKHTGR) is disordered.

The protein belongs to the universal ribosomal protein uL4 family. Part of the 50S ribosomal subunit.

Functionally, one of the primary rRNA binding proteins, this protein initially binds near the 5'-end of the 23S rRNA. It is important during the early stages of 50S assembly. It makes multiple contacts with different domains of the 23S rRNA in the assembled 50S subunit and ribosome. In terms of biological role, forms part of the polypeptide exit tunnel. This Fervidobacterium nodosum (strain ATCC 35602 / DSM 5306 / Rt17-B1) protein is Large ribosomal subunit protein uL4.